A 968-amino-acid polypeptide reads, in one-letter code: Glycine dehydrogenase (decarboxylating) (968 aa).

Residue Lys-713 is modified to N6-(pyridoxal phosphate)lysine.

The protein belongs to the GcvP family. As to quaternary structure, the glycine cleavage system is composed of four proteins: P, T, L and H. Requires pyridoxal 5'-phosphate as cofactor.

The catalysed reaction is N(6)-[(R)-lipoyl]-L-lysyl-[glycine-cleavage complex H protein] + glycine + H(+) = N(6)-[(R)-S(8)-aminomethyldihydrolipoyl]-L-lysyl-[glycine-cleavage complex H protein] + CO2. The glycine cleavage system catalyzes the degradation of glycine. The P protein binds the alpha-amino group of glycine through its pyridoxal phosphate cofactor; CO(2) is released and the remaining methylamine moiety is then transferred to the lipoamide cofactor of the H protein. This is Glycine dehydrogenase (decarboxylating) from Variovorax paradoxus (strain S110).